We begin with the raw amino-acid sequence, 229 residues long: Endonuclease V (229 aa).

Mg(2+) is bound by residues D46 and D114.

This sequence belongs to the endonuclease V family. It depends on Mg(2+) as a cofactor.

It localises to the cytoplasm. The catalysed reaction is Endonucleolytic cleavage at apurinic or apyrimidinic sites to products with a 5'-phosphate.. Its function is as follows. DNA repair enzyme involved in the repair of deaminated bases. Selectively cleaves double-stranded DNA at the second phosphodiester bond 3' to a deoxyinosine leaving behind the intact lesion on the nicked DNA. This is Endonuclease V from Streptomyces avermitilis (strain ATCC 31267 / DSM 46492 / JCM 5070 / NBRC 14893 / NCIMB 12804 / NRRL 8165 / MA-4680).